We begin with the raw amino-acid sequence, 3259 residues long: Golgin subfamily B member 1 (3259 aa).

Met-1 is subject to N-acetylmethionine. The Cytoplasmic segment spans residues 1–3235 (MLSRLSGLAN…LRSLCHSRTR (3235 aa)). 4 positions are modified to phosphoserine: Ser-6, Ser-17, Ser-138, and Ser-528. Residues 48-593 (EDVQERLAYA…RAEEADHEVL (546 aa)) adopt a coiled-coil conformation. The interval 119–142 (GTVLPTEPQSEEQLSKHDKSSTEE) is disordered. The span at 131-142 (QLSKHDKSSTEE) shows a compositional bias: basic and acidic residues. The disordered stretch occupies residues 624 to 652 (LMPNEESSLPAVEKEQASTEHQSRTSEEI). Residues 635 to 650 (VEKEQASTEHQSRTSE) are compositionally biased toward basic and acidic residues. Ser-653 carries the phosphoserine modification. 3 coiled-coil regions span residues 677–1028 (DIGQ…KEIP), 1062–1245 (LKQT…ESID), and 1301–1779 (GTSV…TEKH). Residues 944-963 (AKKEQVEEDNEVSSGLKQNY) form a disordered region. The segment covering 1747 to 1763 (SEKDSLSEEVQDLKHQI) has biased composition (basic and acidic residues). Residues 1747 to 1829 (SEKDSLSEEV…SANPAVSKDF (83 aa)) are disordered. Polar residues-rich tracts occupy residues 1782-1794 (QTNVTEEGTQSIP) and 1802-1820 (SLSMSTRPTCSESVPSAKS). The stretch at 1828–3185 (DFSSHDEINN…EQIRRLEHSE (1358 aa)) forms a coiled coil. Phosphoserine occurs at positions 2216, 2735, 2872, and 2884. The disordered stretch occupies residues 2856-2876 (RKSEEGKQRSAAQPSTSPAEV). A compositionally biased stretch (polar residues) spans 2865–2875 (SAAQPSTSPAE). Residues 2998-3021 (TQPLKVQYQRQASPETSASPDGSQ) are disordered. Ser-3037 carries the phosphoserine modification. Residues 3107-3140 (IDVAPGAPQEKNGVHRKSDPEELREPQQSFSEAQ) are disordered. The segment covering 3118–3131 (NGVHRKSDPEELRE) has biased composition (basic and acidic residues). The helical transmembrane segment at 3236–3256 (VPLLAAIYFLMIHVLLILCFT) threads the bilayer. Over 3257-3259 (GHL) the chain is Lumenal.

In terms of assembly, homodimer; disulfide-linked. Interacts with PLK3.

It localises to the golgi apparatus membrane. May participate in forming intercisternal cross-bridges of the Golgi complex. This Homo sapiens (Human) protein is Golgin subfamily B member 1 (GOLGB1).